The sequence spans 155 residues: Egg-lysin (155 aa).

The signal sequence occupies residues 1–18 (MKLLVLCLFAMMATLAVS).

As to quaternary structure, monomer. Homodimer. Molecules associate into dimers and then rapidly dissociate again. Interacts (as a monomer) with the egg vitelline layer protein VERL (via VERL repeats); each VERL chain can bind multiple copies of lysin. As to expression, sperm (at protein level).

It is found in the cytoplasmic vesicle. Its subcellular location is the secretory vesicle. The protein localises to the acrosome lumen. Functionally, creates a 3 um hole in the egg vitelline layer through which the sperm passes. Does not have enzyme activity. Species-specific interaction between the sperm protein lysin and the egg protein VERL exposes a basic surface on lysin that may dissociate the egg vitelline layer via electrostatic repulsion. Plays a role in ensuring species-specific fertilization. This chain is Egg-lysin, found in Haliotis corrugata (Pink abalone).